A 611-amino-acid polypeptide reads, in one-letter code: Polyphenol oxidase 4 (611 aa).

The Cu cation site is built by His57, His82, His91, His251, His255, and His283. Positions 80-82 form a cross-link, 2'-(S-cysteinyl)-histidine (Cys-His); sequence CTH. Residue His255 coordinates substrate. Positions 380–611 are cleaved as a propeptide — removed in mature form; the sequence is IKKSEGGKNP…GGLGALGRIF (232 aa).

This sequence belongs to the tyrosinase family. In terms of assembly, heterotetramer. Requires Cu(2+) as cofactor. Post-translationally, the C-ter is probably cleaved after Gly-379 since the mature active protein is smaller than the protein encoded by the gene.

The catalysed reaction is 2 L-dopa + O2 = 2 L-dopaquinone + 2 H2O. It carries out the reaction L-tyrosine + O2 = L-dopaquinone + H2O. Copper-containing oxidase that catalyzes both the o-hydroxylation of monophenols and the subsequent oxidation of the resulting o-diphenols into reactive o-quinones, which evolve spontaneously to produce intermediates, which associate in dark brown pigments. Involved in the initial step of melanin synthesis. Melanins constitute a mechanism of defense and resistance to stress such as UV radiations, free radicals, gamma rays, dehydratation and extreme temperatures, and contribute to the fungal cell-wall resistance against hydrolytic enzymes in avoiding cellular lysis. Fungal pigments are also involved in the formation and stability of spores. This Agaricus bisporus (White button mushroom) protein is Polyphenol oxidase 4 (PPO4).